The following is a 297-amino-acid chain: T-cell leukemia homeobox protein 1 (297 aa).

The segment at 153 to 174 (DRFTGHPYQNRTPPKKKKPRTS) is disordered. The segment at residues 168 to 227 (KKKPRTSFTRLQICELEKRFHRQKYLASAERAALAKALKMTDAQVKTWFQNRRTKWRRQT) is a DNA-binding region (homeobox).

The protein localises to the nucleus. Seems to be involved in the development of cranial sensory innervation from peripheral ganglia. This Gallus gallus (Chicken) protein is T-cell leukemia homeobox protein 1 (TLX1).